The primary structure comprises 232 residues: Ubiquinone biosynthesis O-methyltransferase (232 aa).

S-adenosyl-L-methionine is bound by residues arginine 36, glycine 55, aspartate 76, and leucine 120.

This sequence belongs to the methyltransferase superfamily. UbiG/COQ3 family.

The catalysed reaction is a 3-demethylubiquinol + S-adenosyl-L-methionine = a ubiquinol + S-adenosyl-L-homocysteine + H(+). The enzyme catalyses a 3-(all-trans-polyprenyl)benzene-1,2-diol + S-adenosyl-L-methionine = a 2-methoxy-6-(all-trans-polyprenyl)phenol + S-adenosyl-L-homocysteine + H(+). It participates in cofactor biosynthesis; ubiquinone biosynthesis. Functionally, O-methyltransferase that catalyzes the 2 O-methylation steps in the ubiquinone biosynthetic pathway. This Pseudomonas putida (strain GB-1) protein is Ubiquinone biosynthesis O-methyltransferase.